Consider the following 130-residue polypeptide: Small ribosomal subunit protein uS17m (130 aa).

A mitochondrion-targeting transit peptide spans 1-20; it reads MSVVRSSVHARWIVGKVIGT.

Belongs to the universal ribosomal protein uS17 family. In terms of assembly, component of the mitochondrial small ribosomal subunit (mt-SSU). Mature mammalian 55S mitochondrial ribosomes consist of a small (28S) and a large (39S) subunit. The 28S small subunit contains a 12S ribosomal RNA (12S mt-rRNA) and 30 different proteins. The 39S large subunit contains a 16S rRNA (16S mt-rRNA), a copy of mitochondrial valine transfer RNA (mt-tRNA(Val)), which plays an integral structural role, and 52 different proteins.

It localises to the mitochondrion. The chain is Small ribosomal subunit protein uS17m (MRPS17) from Homo sapiens (Human).